The primary structure comprises 297 residues: Large ribosomal subunit protein uL15m (297 aa).

The N-terminal 21 residues, 1 to 21 (MSGNGVHGVHGALQLLRSLPK), are a transit peptide targeting the mitochondrion. Residues 23-69 (SLANLRPNPGSKKPERRRGRGRYRGRKCGRGHKGERQRGNRPRLGFE) are disordered. The segment covering 36–53 (PERRRGRGRYRGRKCGRG) has biased composition (basic residues).

This sequence belongs to the universal ribosomal protein uL15 family. Component of the mitochondrial ribosome large subunit (39S) which comprises a 16S rRNA and about 50 distinct proteins.

It is found in the mitochondrion. The sequence is that of Large ribosomal subunit protein uL15m (MRPL15) from Gallus gallus (Chicken).